We begin with the raw amino-acid sequence, 103 residues long: Large ribosomal subunit protein bL21 (103 aa).

It belongs to the bacterial ribosomal protein bL21 family. Part of the 50S ribosomal subunit. Contacts protein L20.

Functionally, this protein binds to 23S rRNA in the presence of protein L20. The protein is Large ribosomal subunit protein bL21 of Rhodococcus jostii (strain RHA1).